The primary structure comprises 122 residues: Large ribosomal subunit protein uL14 (122 aa).

The protein belongs to the universal ribosomal protein uL14 family. As to quaternary structure, part of the 50S ribosomal subunit. Forms a cluster with proteins L3 and L19. In the 70S ribosome, L14 and L19 interact and together make contacts with the 16S rRNA in bridges B5 and B8.

Its function is as follows. Binds to 23S rRNA. Forms part of two intersubunit bridges in the 70S ribosome. In Xanthomonas oryzae pv. oryzae (strain MAFF 311018), this protein is Large ribosomal subunit protein uL14.